The following is a 647-amino-acid chain: Protein FAM161A (647 aa).

Disordered regions lie at residues 32 to 55 (RELG…TSME) and 143 to 175 (PAQH…GDSE). The span at 152–161 (SRSVSPSLAE) shows a compositional bias: polar residues. Coiled-coil stretches lie at residues 243 to 268 (IKSK…ECQK) and 518 to 544 (AIRK…VLNK). Disordered stretches follow at residues 504–524 (QTPR…KREK) and 588–647 (DEHV…IEEI). Composition is skewed to basic and acidic residues over residues 510–524 (ESSK…KREK) and 588–600 (DEHV…KKIP). Residues 613–638 (DLLDDEEDDKYDCESEEAEEEDAYST) are compositionally biased toward acidic residues.

The protein belongs to the FAM161 family.

It is found in the cytoplasm. The protein localises to the cytoskeleton. The protein resides in the cilium basal body. Its subcellular location is the cell projection. It localises to the cilium. It is found in the microtubule organizing center. The protein localises to the centrosome. The protein resides in the centriole. Involved in ciliogenesis. This chain is Protein FAM161A (fam161a), found in Xenopus laevis (African clawed frog).